A 280-amino-acid chain; its full sequence is Mitochondrial outer membrane protein porin 2 (280 aa).

The protein belongs to the eukaryotic mitochondrial porin (TC 1.B.8.1) family. As to expression, expressed in roots, stems, leaves, palea, lemma and pollen.

The protein resides in the mitochondrion outer membrane. In terms of biological role, forms a channel through the mitochondrial outer membrane that allows diffusion of small hydrophilic molecules. The channel adopts an open conformation at low or zero membrane potential and a closed conformation at potentials above 30-40 mV. The open state has a weak anion selectivity whereas the closed state is cation-selective. The chain is Mitochondrial outer membrane protein porin 2 (VDAC2) from Oryza sativa subsp. japonica (Rice).